The sequence spans 418 residues: Serine hydroxymethyltransferase (418 aa).

Residues Leu120 and 124–126 contribute to the (6S)-5,6,7,8-tetrahydrofolate site; that span reads GHL. Lys229 bears the N6-(pyridoxal phosphate)lysine mark. 353–355 contributes to the (6S)-5,6,7,8-tetrahydrofolate binding site; it reads SPF.

Belongs to the SHMT family. As to quaternary structure, homodimer. Pyridoxal 5'-phosphate is required as a cofactor.

The protein resides in the cytoplasm. The catalysed reaction is (6R)-5,10-methylene-5,6,7,8-tetrahydrofolate + glycine + H2O = (6S)-5,6,7,8-tetrahydrofolate + L-serine. It functions in the pathway one-carbon metabolism; tetrahydrofolate interconversion. It participates in amino-acid biosynthesis; glycine biosynthesis; glycine from L-serine: step 1/1. Catalyzes the reversible interconversion of serine and glycine with tetrahydrofolate (THF) serving as the one-carbon carrier. This reaction serves as the major source of one-carbon groups required for the biosynthesis of purines, thymidylate, methionine, and other important biomolecules. Also exhibits THF-independent aldolase activity toward beta-hydroxyamino acids, producing glycine and aldehydes, via a retro-aldol mechanism. This chain is Serine hydroxymethyltransferase, found in Psychrobacter arcticus (strain DSM 17307 / VKM B-2377 / 273-4).